The primary structure comprises 121 residues: Protein AC4 (121 aa).

The tract at residues 11 to 30 (RGQSSNPHTSESQERNIQTG) is disordered. The span at 12–30 (GQSSNPHTSESQERNIQTG) shows a compositional bias: polar residues.

This sequence belongs to the geminiviridae protein AC4/C4 family.

In terms of biological role, pathogenicity determinant. May act as a suppressor of RNA-mediated gene silencing, also known as post-transcriptional gene silencing (PTGS), a mechanism of plant viral defense that limits the accumulation of viral RNAs. The polypeptide is Protein AC4 (Cabbage leaf curl virus (isolate Jamaica) (CaLCuV)).